The primary structure comprises 589 residues: Polypeptide N-acetylgalactosaminyltransferase 4 (589 aa).

Over 1-11 (MLPRMLKMKTV) the chain is Cytoplasmic. A helical; Signal-anchor for type II membrane protein transmembrane segment spans residues 12 to 31 (GTVLAVIWLFGLAFIYVQST). Topologically, residues 32-589 (SSSLRPPGRH…WIFEKLDTYE (558 aa)) are lumenal. Positions 33 to 73 (SSLRPPGRHPPPLPQLDPLIPQNPPQNDEIRPKKSAPPIPT) are disordered. 5 cysteine pairs are disulfide-bonded: cysteine 140/cysteine 369, cysteine 360/cysteine 438, cysteine 471/cysteine 488, cysteine 514/cysteine 531, and cysteine 553/cysteine 571. The tract at residues 150 to 255 (MQPTTVIITY…QKWLEPLLAR (106 aa)) is catalytic subdomain A. Positions 191 and 216 each coordinate substrate. Residue aspartate 239 coordinates Mn(2+). Serine 240 serves as a coordination point for substrate. Residue histidine 241 participates in Mn(2+) binding. The catalytic subdomain B stretch occupies residues 315–377 (PIRSPTMAGG…PCSRVGHVFR (63 aa)). Tryptophan 346 lines the substrate pocket. Position 374 (histidine 374) interacts with Mn(2+). The substrate site is built by arginine 377, histidine 380, and tyrosine 382. The Ricin B-type lectin domain maps to 458–589 (TPGKSFQMKI…WIFEKLDTYE (132 aa)). The N-linked (GlcNAc...) asparagine glycan is linked to asparagine 523.

The protein belongs to the glycosyltransferase 2 family. GalNAc-T subfamily. Mn(2+) serves as cofactor.

Its subcellular location is the golgi apparatus membrane. The catalysed reaction is L-seryl-[protein] + UDP-N-acetyl-alpha-D-galactosamine = a 3-O-[N-acetyl-alpha-D-galactosaminyl]-L-seryl-[protein] + UDP + H(+). It catalyses the reaction L-threonyl-[protein] + UDP-N-acetyl-alpha-D-galactosamine = a 3-O-[N-acetyl-alpha-D-galactosaminyl]-L-threonyl-[protein] + UDP + H(+). It functions in the pathway protein modification; protein glycosylation. Catalyzes the initial reaction in O-linked oligosaccharide biosynthesis, the transfer of an N-acetyl-D-galactosamine residue to a serine or threonine residue on the protein receptor. The chain is Polypeptide N-acetylgalactosaminyltransferase 4 (gly-4) from Caenorhabditis elegans.